Here is a 430-residue protein sequence, read N- to C-terminus: Bone morphogenetic protein 7 (430 aa).

A signal peptide spans 1-29; the sequence is MHVRSLRAAAPHSFVALWAPLFLLRSALA. Residues 30-291 constitute a propeptide that is removed on maturation; it reads DFSLDNEVHS…ATEVHLRSIR (262 aa). N-linked (GlcNAc...) asparagine glycans are attached at residues N186, N301, N320, and N371. Positions 290–310 are disordered; it reads IRSTGGKQRSQNRSKTPKNQE. 3 cysteine pairs are disulfide-bonded: C329-C395, C358-C427, and C362-C429.

The protein belongs to the TGF-beta family. In terms of assembly, homodimer; disulfide-linked. Interacts with SOSTDC1. Interacts with TWSG1. Interacts with FBN1 (via N-terminal domain) and FBN2. Interacts with type I receptor ACVR1. Interacts with type II receptor ACVR2A. Interacts with NOG; this interaction inhibits canonical BMP signaling. Interacts with SCUBE3. Interacts with ERFE; the interaction inhibits BMP-induced transcription of HAMP. Interacts with TGFBR3.

It is found in the secreted. Its function is as follows. Growth factor of the TGF-beta superfamily that plays important role in various biological processes, including embryogenesis, hematopoiesis, neurogenesis and skeletal morphogenesis. Initiates the canonical BMP signaling cascade by associating with type I receptor ACVR1 and type II receptor ACVR2A. Once all three components are bound together in a complex at the cell surface, ACVR2A phosphorylates and activates ACVR1. In turn, ACVR1 propagates signal by phosphorylating SMAD1/5/8 that travel to the nucleus and act as activators and repressors of transcription of target genes. For specific functions such as growth cone collapse in developing spinal neurons and chemotaxis of monocytes, also uses BMPR2 as type II receptor. Can also signal through non-canonical pathways such as P38 MAP kinase signaling cascade that promotes brown adipocyte differentiation through activation of target genes, including members of the SOX family of transcription factors. Promotes the expression of HAMP, this is repressed by its interaction with ERFE. The sequence is that of Bone morphogenetic protein 7 (Bmp7) from Mus musculus (Mouse).